We begin with the raw amino-acid sequence, 471 residues long: 3-isopropylmalate dehydratase large subunit (471 aa).

[4Fe-4S] cluster-binding residues include C349, C409, and C412.

Belongs to the aconitase/IPM isomerase family. LeuC type 1 subfamily. As to quaternary structure, heterodimer of LeuC and LeuD. It depends on [4Fe-4S] cluster as a cofactor.

The enzyme catalyses (2R,3S)-3-isopropylmalate = (2S)-2-isopropylmalate. It functions in the pathway amino-acid biosynthesis; L-leucine biosynthesis; L-leucine from 3-methyl-2-oxobutanoate: step 2/4. Functionally, catalyzes the isomerization between 2-isopropylmalate and 3-isopropylmalate, via the formation of 2-isopropylmaleate. This is 3-isopropylmalate dehydratase large subunit from Aliivibrio salmonicida (strain LFI1238) (Vibrio salmonicida (strain LFI1238)).